The chain runs to 113 residues: Hydrogenase maturation factor HypA (113 aa).

Residue H2 coordinates Ni(2+). 4 residues coordinate Zn(2+): C73, C76, C89, and C92.

It belongs to the HypA/HybF family.

Its function is as follows. Involved in the maturation of [NiFe] hydrogenases. Required for nickel insertion into the metal center of the hydrogenase. The polypeptide is Hydrogenase maturation factor HypA (Cereibacter sphaeroides (strain KD131 / KCTC 12085) (Rhodobacter sphaeroides)).